The sequence spans 78 residues: UPF0335 protein RPR_04100 (78 aa).

Belongs to the UPF0335 family.

In Rickettsia peacockii (strain Rustic), this protein is UPF0335 protein RPR_04100.